A 457-amino-acid polypeptide reads, in one-letter code: MTTDEGAKSSRENPAATVAEQGEDVTSKKDRGVLKIVKRVGHGEETPMIGDKVYVHYNGKLSNGKKFDSSHDRNEPFVFSIGKGQVIKAWDIGVSTMKKGEICHLLCKPEYAYGATGSLPKIPSNATLFFEVELLNFKGEDLLEDGGIIRRTKRRGEGYSNPNEGARVQIHLEGRCGGRVFDCRDVAFTVGEGEDHDIPIGIDKALEKMQREEQCILHLGPRYGFGEAGKPKFGIEPNAELIYEVTLKSFEKAKESWEMDTKEKLEQAAIVKEEGTVYFKGGKYVQAVIQYGKIVSWLEMEYGLSEKESKASESFLLAAFLNLAMCYLKLREYAKAVECCDKALGLDSANEKGLYRRGEAQLLMNEFESAKGDFEKVLEVNPQNKAARLQIVVCQKKAKEHNERDRRIYANMFKKFAEQDAKEEANKAVSKKTSEGVTNEKLTVSHAVEEEKPEGHV.

M1 is modified (N-acetylmethionine). Positions 1–11 (MTTDEGAKSSR) are enriched in basic and acidic residues. The tract at residues 1–28 (MTTDEGAKSSRENPAATVAEQGEDVTSK) is disordered. Position 28 is an N6-acetyllysine (K28). PPIase FKBP-type domains are found at residues 50 to 138 (GDKV…LNFK) and 165 to 251 (GARV…KSFE). TPR repeat units lie at residues 268 to 301 (AAIV…LEME), 317 to 350 (LAAF…DSAN), and 351 to 384 (EKGL…NPQN). A disordered region spans residues 424–457 (EANKAVSKKTSEGVTNEKLTVSHAVEEEKPEGHV). S445 bears the Phosphoserine mark. Basic and acidic residues predominate over residues 447 to 457 (AVEEEKPEGHV).

Part of a heteromultimeric cytoplasmic complex with HSP90AA1, HSPA1A/HSPA1B and steroid receptors. Upon ligand binding dissociates from the complex and FKBP4 takes its place. Interacts with functionally mature heterooligomeric progesterone receptor complexes along with HSP90 and TEBP. Interacts with NR3C1. Interacts with Akt/AKT1 and PHLPP1; enhancing dephosphorylation and subsequent activation of Akt/AKT1. Interacts with IFI44L; this interaction modulates the kinase activity of IKBKB and IKBKE. Interacts with IKBKB and IKBKE. Post-translationally, acetylation impairs ability to promote interaction between Akt/AKT1 and PHLPP1. Deacetylation by SIRT7 promotes interaction between Akt/AKT1 and PHLPP1, leading to suppress Akt/AKT1 activation. In terms of processing, ubiquitinated, leading to degradation in a proteasome-dependent manner. Deubiquitinated by USP49, leading to stabilization.

It is found in the cytoplasm. It localises to the nucleus. It carries out the reaction [protein]-peptidylproline (omega=180) = [protein]-peptidylproline (omega=0). Inhibited by both FK506 and rapamycin. Functionally, immunophilin protein with PPIase and co-chaperone activities. Component of unligated steroid receptors heterocomplexes through interaction with heat-shock protein 90 (HSP90). Plays a role in the intracellular trafficking of heterooligomeric forms of steroid hormone receptors maintaining the complex into the cytoplasm when unliganded. Acts as a regulator of Akt/AKT1 activity by promoting the interaction between Akt/AKT1 and PHLPP1, thereby enhancing dephosphorylation and subsequent activation of Akt/AKT1. Interacts with IKBKE and IKBKB which facilitates IKK complex assembly leading to increased IKBKE and IKBKB kinase activity, NF-kappaB activation, and IFN production. This is Peptidyl-prolyl cis-trans isomerase FKBP5 (FKBP5) from Saguinus oedipus (Cotton-top tamarin).